We begin with the raw amino-acid sequence, 803 residues long: Leucine--tRNA ligase (803 aa).

A 'HIGH' region motif is present at residues 40–51 (PYPSGAGLHVGH). The short motif at 575–579 (KMSKS) is the 'KMSKS' region element. Residue lysine 578 coordinates ATP.

This sequence belongs to the class-I aminoacyl-tRNA synthetase family.

It localises to the cytoplasm. The catalysed reaction is tRNA(Leu) + L-leucine + ATP = L-leucyl-tRNA(Leu) + AMP + diphosphate. This chain is Leucine--tRNA ligase, found in Listeria monocytogenes serovar 1/2a (strain ATCC BAA-679 / EGD-e).